We begin with the raw amino-acid sequence, 201 residues long: Histidine biosynthesis bifunctional protein HisIE (201 aa).

Residues 1–114 (MLTAQQIEKL…FAPAQTEWGF (114 aa)) are phosphoribosyl-AMP cyclohydrolase. A phosphoribosyl-ATP pyrophosphohydrolase region spans residues 115–201 (LYQLEKLLAS…SCVIRRLRER (87 aa)).

In the N-terminal section; belongs to the PRA-CH family. This sequence in the C-terminal section; belongs to the PRA-PH family.

It localises to the cytoplasm. It catalyses the reaction 1-(5-phospho-beta-D-ribosyl)-ATP + H2O = 1-(5-phospho-beta-D-ribosyl)-5'-AMP + diphosphate + H(+). The enzyme catalyses 1-(5-phospho-beta-D-ribosyl)-5'-AMP + H2O = 1-(5-phospho-beta-D-ribosyl)-5-[(5-phospho-beta-D-ribosylamino)methylideneamino]imidazole-4-carboxamide. The protein operates within amino-acid biosynthesis; L-histidine biosynthesis; L-histidine from 5-phospho-alpha-D-ribose 1-diphosphate: step 2/9. It participates in amino-acid biosynthesis; L-histidine biosynthesis; L-histidine from 5-phospho-alpha-D-ribose 1-diphosphate: step 3/9. In Photorhabdus laumondii subsp. laumondii (strain DSM 15139 / CIP 105565 / TT01) (Photorhabdus luminescens subsp. laumondii), this protein is Histidine biosynthesis bifunctional protein HisIE.